The chain runs to 915 residues: Bifunctional uridylyltransferase/uridylyl-removing enzyme (915 aa).

A uridylyltransferase region spans residues 1–360; the sequence is MFNCAVTAID…PDEERPKKQP (360 aa). A uridylyl-removing region spans residues 361 to 731; that stretch reads INARFNQVGE…EHRELALDAV (371 aa). The HD domain occupies 478-594; sequence VDAHTLFLIR…TLFADLVGNV (117 aa). ACT domains follow at residues 732 to 817 and 840 to 915; these read QVFV…RIPR and IMSL…NDSI.

This sequence belongs to the GlnD family. Mg(2+) serves as cofactor.

The enzyme catalyses [protein-PII]-L-tyrosine + UTP = [protein-PII]-uridylyl-L-tyrosine + diphosphate. It catalyses the reaction [protein-PII]-uridylyl-L-tyrosine + H2O = [protein-PII]-L-tyrosine + UMP + H(+). With respect to regulation, uridylyltransferase (UTase) activity is inhibited by glutamine, while glutamine activates uridylyl-removing (UR) activity. In terms of biological role, modifies, by uridylylation and deuridylylation, the PII regulatory proteins (GlnB and homologs), in response to the nitrogen status of the cell that GlnD senses through the glutamine level. Under low glutamine levels, catalyzes the conversion of the PII proteins and UTP to PII-UMP and PPi, while under higher glutamine levels, GlnD hydrolyzes PII-UMP to PII and UMP (deuridylylation). Thus, controls uridylylation state and activity of the PII proteins, and plays an important role in the regulation of nitrogen assimilation and metabolism. This Psychrobacter arcticus (strain DSM 17307 / VKM B-2377 / 273-4) protein is Bifunctional uridylyltransferase/uridylyl-removing enzyme.